The sequence spans 277 residues: Protein PTST, chloroplastic (277 aa).

A chloroplast-targeting transit peptide spans 1–44 (MGCVPRIEFGCSSQSLTLSWNLRAWNLCRLNTISHFQKLPYPLV). Residues 95–152 (DTERSKLVKKLSEANQQNRFLKRQLKTQEHEITNIKTELALMELEVQALVKLAEEIAN) adopt a coiled-coil conformation.

In terms of assembly, interacts with GBSS1.

The protein localises to the plastid. The protein resides in the chloroplast stroma. In terms of biological role, involved in targeting GBSS1 to the starch granule. Was originally thought to be a carbohydrate-binding scaffold protein, but it has been shown that it is mainly found as a soluble protein and that interaction with GBSS1 is a pre-requisite for subsequent starch granule binding. Dissociation from starch as a function of pH, Mg(2+) concentration or redox state is not observed. Interacts primarily with amylopectin and is required for amylose synthesis. In Arabidopsis thaliana (Mouse-ear cress), this protein is Protein PTST, chloroplastic.